Reading from the N-terminus, the 887-residue chain is 3-hydroxy-3-methylglutaryl-coenzyme A reductase (887 aa).

Residues 1–9 lie on the Cytoplasmic side of the membrane; it reads MLSRLFRMH. Residues 10 to 39 traverse the membrane as a helical segment; the sequence is GLFVASHPWEVIVGTVTLTICMMSMNMFTG. Residues 40–56 are Lumenal-facing; the sequence is NNKICGWNYECPKFEED. A helical transmembrane segment spans residues 57 to 78; the sequence is VLSSDIIILTITRCIAILYIYF. The region spanning 61–218 is the SSD domain; that stretch reads DIIILTITRC…MTFFPACVSL (158 aa). An INSIG-binding motif motif is present at residues 75–78; the sequence is YIYF. At 79–89 the chain is on the cytoplasmic side; that stretch reads QFQNLRQLGSK. K89 participates in a covalent cross-link: Glycyl lysine isopeptide (Lys-Gly) (interchain with G-Cter in ubiquitin). The helical transmembrane segment at 90–114 threads the bilayer; that stretch reads YILGIAGLFTIFSSFVFSTVVIHFL. Over 115–123 the chain is Lumenal; it reads DKELTGLNE. The helical transmembrane segment at 124–149 threads the bilayer; sequence ALPFFLLLIDLSRASALAKFALSSNS. Residues 150-159 are Cytoplasmic-facing; that stretch reads QDEVRENIAR. A helical membrane pass occupies residues 160–187; that stretch reads GMAILGPTFTLDALVECLVIGVGTMSGV. Topologically, residues 188-191 are lumenal; the sequence is RQLE. Residues 192–220 form a helical membrane-spanning segment; it reads IMCCFGCMSVLANYFVFMTFFPACVSLVL. Residues 221-248 lie on the Cytoplasmic side of the membrane; the sequence is ELSRESREGRPIWQLSHFARVLEEEENK. A Glycyl lysine isopeptide (Lys-Gly) (interchain with G-Cter in ubiquitin) cross-link involves residue K248. A helical transmembrane segment spans residues 249–275; it reads PNPVTQRVKMIMSLGLVLVHAHSRWIA. Over 276 to 314 the chain is Lumenal; the sequence is DPSPQNSTTEHSKVSLGLDEDVSKRIEPSVSLWQFYLSK. N281 carries N-linked (GlcNAc...) asparagine glycosylation. A helical membrane pass occupies residues 315–339; that stretch reads MISMDIEQVVTLSLAFLLAVKYIFF. Residues 340 to 887 lie on the Cytoplasmic side of the membrane; it reads EQAETESTLS…LQGTCTKKSA (548 aa). Catalysis depends on charge relay system residues E558, K690, and D766. H865 (proton donor) is an active-site residue. The residue at position 871 (S871) is a Phosphoserine; by AMPK.

It belongs to the HMG-CoA reductase family. In terms of assembly, homotetramer. Homodimer. Interacts (via its SSD) with INSIG1; the interaction, accelerated by sterols, leads to the recruitment of HMGCR to AMFR/gp78 for its ubiquitination by the sterol-mediated ERAD pathway. Interacts with UBIAD1. Post-translationally, N-glycosylated. Glycosylated with high mannose chains including Man(6)(GlcNAc)(2), Man(7)(GlcNAc)(2) and Man(8)(GlcNAc)(2). Deglycosylated by NGLY1 on release from the endoplasmic reticulum (ER) in a sterol-mediated manner. Undergoes sterol-mediated ubiquitination and ER-associated degradation (ERAD). Accumulation of sterols in the endoplasmic reticulum (ER) membrane, triggers binding of the reductase to the ER membrane protein INSIG1 or INSIG2. The INSIG1 binding leads to the recruitment of the ubiquitin ligase, AMFR/gp78, RNF139 or RNF145, initiating ubiquitination of the reductase. The ubiquitinated reductase is then extracted from the ER membrane and delivered to cytosolic 26S proteosomes by a mechanism probably mediated by the ATPase Valosin-containing protein VCP/p97. The INSIG2-binding leads to the recruitment of the ubiquitin ligase RNF139, initiating ubiquitination of the reductase. Lys-248 is the main site of ubiquitination. Ubiquitination is enhanced by the presence of a geranylgeranylated protein. In terms of processing, phosphorylated. Phosphorylation at Ser-871 reduces the catalytic activity.

It is found in the endoplasmic reticulum membrane. Its subcellular location is the peroxisome membrane. The catalysed reaction is (R)-mevalonate + 2 NADP(+) + CoA = (3S)-3-hydroxy-3-methylglutaryl-CoA + 2 NADPH + 2 H(+). It participates in metabolic intermediate biosynthesis; (R)-mevalonate biosynthesis; (R)-mevalonate from acetyl-CoA: step 3/3. Regulated by a negative feedback mechanism through sterols and non-sterol metabolites derived from mevalonate. Phosphorylation at Ser-871 down-regulates the catalytic activity. Functionally, catalyzes the conversion of (3S)-hydroxy-3-methylglutaryl-CoA (HMG-CoA) to mevalonic acid, the rate-limiting step in the synthesis of cholesterol and other isoprenoids, thus plays a critical role in cellular cholesterol homeostasis. The sequence is that of 3-hydroxy-3-methylglutaryl-coenzyme A reductase (HMGCR) from Cricetulus griseus (Chinese hamster).